The chain runs to 372 residues: tRNA-specific 2-thiouridylase MnmA (372 aa).

ATP is bound by residues 7 to 14 and methionine 33; that span reads GLSGGVDS. An interaction with target base in tRNA region spans residues 104–106; the sequence is NPD. The active-site Nucleophile is the cysteine 109. Cysteine 109 and cysteine 202 are oxidised to a cystine. ATP is bound at residue glycine 134. Positions 152 to 154 are interaction with tRNA; that stretch reads KDQ. Cysteine 202 functions as the Cysteine persulfide intermediate in the catalytic mechanism. Residues 310–311 are interaction with tRNA; it reads RY.

The protein belongs to the MnmA/TRMU family.

It localises to the cytoplasm. It carries out the reaction S-sulfanyl-L-cysteinyl-[protein] + uridine(34) in tRNA + AH2 + ATP = 2-thiouridine(34) in tRNA + L-cysteinyl-[protein] + A + AMP + diphosphate + H(+). Its function is as follows. Catalyzes the 2-thiolation of uridine at the wobble position (U34) of tRNA, leading to the formation of s(2)U34. The polypeptide is tRNA-specific 2-thiouridylase MnmA (Mesomycoplasma hyopneumoniae (strain 232) (Mycoplasma hyopneumoniae)).